We begin with the raw amino-acid sequence, 248 residues long: 3-deoxy-manno-octulosonate cytidylyltransferase (248 aa).

This sequence belongs to the KdsB family.

Its subcellular location is the cytoplasm. The enzyme catalyses 3-deoxy-alpha-D-manno-oct-2-ulosonate + CTP = CMP-3-deoxy-beta-D-manno-octulosonate + diphosphate. The protein operates within nucleotide-sugar biosynthesis; CMP-3-deoxy-D-manno-octulosonate biosynthesis; CMP-3-deoxy-D-manno-octulosonate from 3-deoxy-D-manno-octulosonate and CTP: step 1/1. It participates in bacterial outer membrane biogenesis; lipopolysaccharide biosynthesis. Functionally, activates KDO (a required 8-carbon sugar) for incorporation into bacterial lipopolysaccharide in Gram-negative bacteria. The protein is 3-deoxy-manno-octulosonate cytidylyltransferase of Chlorobaculum parvum (strain DSM 263 / NCIMB 8327) (Chlorobium vibrioforme subsp. thiosulfatophilum).